The following is a 345-amino-acid chain: NADH-ubiquinone oxidoreductase chain 2 (345 aa).

Transmembrane regions (helical) follow at residues 25–45 (HWLLAWMGLEINTLAIIPLMT), 60–80 (FLTQAAASALLLFSSLNNAWL), 99–119 (TIAICMKLGLAPFHFWLPEVL), 149–171 (LNTPLLLTLGLTSTLIGGWGGLN), 178–198 (ILAFSSIAHLGWMISILPFSP), 199–219 (QLMILNLTIYLIMTSTMFLVL), 242–262 (ALSLLTLLSLGGLPPLSGFVP), 282–302 (LALSALLSLFFYLRLTYIVTL), and 324–344 (LLLSIALILSSFIIPISPLTL).

Belongs to the complex I subunit 2 family. As to quaternary structure, core subunit of respiratory chain NADH dehydrogenase (Complex I) which is composed of 45 different subunits.

It localises to the mitochondrion inner membrane. It catalyses the reaction a ubiquinone + NADH + 5 H(+)(in) = a ubiquinol + NAD(+) + 4 H(+)(out). Its function is as follows. Core subunit of the mitochondrial membrane respiratory chain NADH dehydrogenase (Complex I) which catalyzes electron transfer from NADH through the respiratory chain, using ubiquinone as an electron acceptor. Essential for the catalytic activity and assembly of complex I. The protein is NADH-ubiquinone oxidoreductase chain 2 (mt-nd2) of Xenopus laevis (African clawed frog).